Reading from the N-terminus, the 217-residue chain is Protein dao-4 (217 aa).

Residues 1 to 21 (MKIALYSILLITVCYLSSTDA) form the signal peptide.

The protein resides in the nucleus. It is found in the secreted. Functionally, probably acts downstream of the Wnt signaling pathway. This is Protein dao-4 from Caenorhabditis elegans.